The following is a 231-amino-acid chain: Large ribosomal subunit protein uL1 (231 aa).

The protein belongs to the universal ribosomal protein uL1 family. As to quaternary structure, part of the 50S ribosomal subunit.

Functionally, binds directly to 23S rRNA. The L1 stalk is quite mobile in the ribosome, and is involved in E site tRNA release. In terms of biological role, protein L1 is also a translational repressor protein, it controls the translation of the L11 operon by binding to its mRNA. The polypeptide is Large ribosomal subunit protein uL1 (Ralstonia nicotianae (strain ATCC BAA-1114 / GMI1000) (Ralstonia solanacearum)).